A 193-amino-acid chain; its full sequence is Acyl-homoserine-lactone synthase (193 aa).

This sequence belongs to the autoinducer synthase family.

It carries out the reaction a fatty acyl-[ACP] + S-adenosyl-L-methionine = an N-acyl-L-homoserine lactone + S-methyl-5'-thioadenosine + holo-[ACP] + H(+). In terms of biological role, required for the synthesis of OHHL (N-(3-oxohexanoyl)-L-homoserine lactone) also known as VAI or N-(beta-ketocaproyl)homoserine lactone or 3-oxo-N-(tetrahydro-2-oxo-3-furanyl)-hexanamide, an autoinducer molecule which binds to LuxR and thus acts in bioluminescence regulation. The sequence is that of Acyl-homoserine-lactone synthase (luxI) from Aliivibrio fischeri (strain ATCC 700601 / ES114) (Vibrio fischeri).